Consider the following 405-residue polypeptide: Acetate kinase (405 aa).

Position 7 (asparagine 7) interacts with Mg(2+). Lysine 14 contributes to the ATP binding site. Arginine 92 lines the substrate pocket. The active-site Proton donor/acceptor is the aspartate 149. ATP is bound by residues 209-213 (HLGNG) and 284-286 (DMR). Glutamate 389 is a Mg(2+) binding site.

Belongs to the acetokinase family. In terms of assembly, homodimer. Mg(2+) is required as a cofactor. It depends on Mn(2+) as a cofactor.

It localises to the cytoplasm. The catalysed reaction is acetate + ATP = acetyl phosphate + ADP. Its pathway is metabolic intermediate biosynthesis; acetyl-CoA biosynthesis; acetyl-CoA from acetate: step 1/2. Functionally, catalyzes the formation of acetyl phosphate from acetate and ATP. Can also catalyze the reverse reaction. This chain is Acetate kinase, found in Borreliella burgdorferi (strain ZS7) (Borrelia burgdorferi).